A 556-amino-acid chain; its full sequence is Cell wall integrity and stress response component 3 (556 aa).

The signal sequence occupies residues methionine 1 to alanine 38. The WSC domain maps to aspartate 39–alanine 132. Residues aspartate 39–glycine 384 are Extracellular-facing. Residue asparagine 84 is glycosylated (N-linked (GlcNAc...) asparagine). 2 stretches are compositionally biased toward low complexity: residues serine 142–threonine 169 and threonine 184–serine 257. Disordered stretches follow at residues serine 142 to serine 257 and threonine 269 to serine 312. N-linked (GlcNAc...) asparagine glycans are attached at residues asparagine 367 and asparagine 370. Residues isoleucine 385–tryptophan 405 traverse the membrane as a helical segment. At arginine 406–alanine 556 the chain is on the cytoplasmic side. Disordered regions lie at residues tyrosine 425–threonine 444 and leucine 534–alanine 556. The segment covering glutamate 546 to alanine 556 has biased composition (polar residues).

The protein localises to the membrane. In Saccharomyces cerevisiae (strain ATCC 204508 / S288c) (Baker's yeast), this protein is Cell wall integrity and stress response component 3 (WSC3).